We begin with the raw amino-acid sequence, 363 residues long: MDVRMNQGHLLLAVTLIVCNSQLLVVANSWWSLAMNPIQRPEMYIIGAQPLCSQLTGLSQGQRKLCQLYQDHMVYIGEGAKTGIKECQYQFRQRRWNCSTVDNTSVFGRVMHIGSRETAFTYAVSAAGVVNAVSRACREGELSTCGCSRAARPRDLPRDWLWGGCGDNVNYGYRFAREFVDAREREKNYPRGSVEHARTLMNLQNNEAGRMAVYNLANVACKCHGVSGSCSLKTCWLQLADFRRVGEFLKEKYDSAAAMRINRRGKLELVNNRFNPPTGEDLVYIDPSPDYCLRNETTGSLGTQGRLCNKTSEGMDGCELMCCGRGYDQFKTYKHERCHCKFHWCCYVKCKRCTSLVDQFVCK.

The first 21 residues, 1–21, serve as a signal peptide directing secretion; that stretch reads MDVRMNQGHLLLAVTLIVCNS. A disulfide bridge connects residues cysteine 87 and cysteine 98. N-linked (GlcNAc...) asparagine glycans are attached at residues asparagine 97 and asparagine 103. 10 disulfide bridges follow: cysteine 137-cysteine 145, cysteine 147-cysteine 165, cysteine 221-cysteine 235, cysteine 223-cysteine 230, cysteine 292-cysteine 323, cysteine 308-cysteine 318, cysteine 322-cysteine 362, cysteine 338-cysteine 353, cysteine 340-cysteine 350, and cysteine 345-cysteine 346. Residue serine 227 is the site of O-palmitoleoyl serine; by PORCN attachment. Asparagine 295 and asparagine 309 each carry an N-linked (GlcNAc...) asparagine glycan.

The protein belongs to the Wnt family. In terms of processing, palmitoleoylation is required for efficient binding to frizzled receptors. Depalmitoleoylation leads to Wnt signaling pathway inhibition.

The protein resides in the secreted. It localises to the extracellular space. The protein localises to the extracellular matrix. Ligand for members of the frizzled family of seven transmembrane receptors. Can activate or inhibit canonical Wnt signaling, depending on receptor context. Required during embryogenesis for extension of the primary anterior-posterior axis. Regulates convergent extension movements and hypaxial myogenesis during gastrulation via activation of non-canonical Wnt signaling. The sequence is that of Protein Wnt-5b (wnt5b) from Danio rerio (Zebrafish).